A 239-amino-acid polypeptide reads, in one-letter code: SkfA peptide export ATP-binding protein SkfE (239 aa).

The 229-residue stretch at 4 to 232 folds into the ABC transporter domain; sequence MQVQNLSKCY…AEWRKEVIRL (229 aa). 36-43 contacts ATP; the sequence is GPNGAGKT.

The protein belongs to the ABC transporter superfamily. SkfA peptide export (TC 3.A.1.128.1) family.

The protein resides in the cell membrane. It carries out the reaction sulfate(out) + ATP + H2O = sulfate(in) + ADP + phosphate + H(+). It catalyses the reaction thiosulfate(out) + ATP + H2O = thiosulfate(in) + ADP + phosphate + H(+). Its function is as follows. Probably part of the ABC transporter SkfEF involved in the export of the bacteriocin SKF. Probably responsible for energy coupling to the transport system. In Bacillus subtilis (strain 168), this protein is SkfA peptide export ATP-binding protein SkfE.